We begin with the raw amino-acid sequence, 160 residues long: Phosphopantetheine adenylyltransferase (160 aa).

Threonine 10 is a binding site for substrate. ATP-binding positions include 10 to 11 and histidine 18; that span reads TF. Lysine 42, leucine 74, and arginine 88 together coordinate substrate. Residues 89–91, glutamate 99, and 124–130 each bind ATP; these read GLR and NSFISST.

It belongs to the bacterial CoaD family. As to quaternary structure, homohexamer. Requires Mg(2+) as cofactor.

It localises to the cytoplasm. It carries out the reaction (R)-4'-phosphopantetheine + ATP + H(+) = 3'-dephospho-CoA + diphosphate. The protein operates within cofactor biosynthesis; coenzyme A biosynthesis; CoA from (R)-pantothenate: step 4/5. Reversibly transfers an adenylyl group from ATP to 4'-phosphopantetheine, yielding dephospho-CoA (dPCoA) and pyrophosphate. The protein is Phosphopantetheine adenylyltransferase of Aeromonas hydrophila subsp. hydrophila (strain ATCC 7966 / DSM 30187 / BCRC 13018 / CCUG 14551 / JCM 1027 / KCTC 2358 / NCIMB 9240 / NCTC 8049).